A 247-amino-acid polypeptide reads, in one-letter code: Ribosomal RNA large subunit methyltransferase E (247 aa).

The segment at 1-21 (MKKTTKKTAGGYGGSGSHKLY) is disordered. 5 residues coordinate S-adenosyl-L-methionine: Gly-88, Trp-90, Asp-111, Asp-127, and Asp-151. Lys-191 acts as the Proton acceptor in catalysis.

The protein belongs to the class I-like SAM-binding methyltransferase superfamily. RNA methyltransferase RlmE family.

It localises to the cytoplasm. The enzyme catalyses uridine(2552) in 23S rRNA + S-adenosyl-L-methionine = 2'-O-methyluridine(2552) in 23S rRNA + S-adenosyl-L-homocysteine + H(+). Specifically methylates the uridine in position 2552 of 23S rRNA at the 2'-O position of the ribose in the fully assembled 50S ribosomal subunit. This Bartonella henselae (strain ATCC 49882 / DSM 28221 / CCUG 30454 / Houston 1) (Rochalimaea henselae) protein is Ribosomal RNA large subunit methyltransferase E.